Reading from the N-terminus, the 699-residue chain is Elongation factor G (699 aa).

The tr-type G domain maps to 10 to 292 (DRTRNIGIMA…AVIDYLPSPT (283 aa)). GTP contacts are provided by residues 19 to 26 (AHIDAGKT), 90 to 94 (DTPGH), and 144 to 147 (NKMD).

It belongs to the TRAFAC class translation factor GTPase superfamily. Classic translation factor GTPase family. EF-G/EF-2 subfamily.

It is found in the cytoplasm. Catalyzes the GTP-dependent ribosomal translocation step during translation elongation. During this step, the ribosome changes from the pre-translocational (PRE) to the post-translocational (POST) state as the newly formed A-site-bound peptidyl-tRNA and P-site-bound deacylated tRNA move to the P and E sites, respectively. Catalyzes the coordinated movement of the two tRNA molecules, the mRNA and conformational changes in the ribosome. In Coxiella burnetii (strain Dugway 5J108-111), this protein is Elongation factor G.